The following is a 298-amino-acid chain: Inosose dehydratase (298 aa).

This sequence belongs to the IolE/MocC family. Glutathione is required as a cofactor. It depends on Co(2+) as a cofactor. Mn(2+) serves as cofactor.

The catalysed reaction is scyllo-inosose = 3D-3,5/4-trihydroxycyclohexane-1,2-dione + H2O. Functionally, catalyzes the dehydration of inosose (2-keto-myo-inositol, 2KMI or 2,4,6/3,5-pentahydroxycyclohexanone) to 3D-(3,5/4)-trihydroxycyclohexane-1,2-dione (D-2,3-diketo-4-deoxy-epi-inositol). The sequence is that of Inosose dehydratase from Histophilus somni (strain 129Pt) (Haemophilus somnus).